Reading from the N-terminus, the 429-residue chain is 4-hydroxybutyrate coenzyme A transferase (429 aa).

215–219 provides a ligand contact to CoA; sequence GIGAI. The active-site 5-glutamyl coenzyme A thioester intermediate is the Glu238. Gly336 lines the CoA pocket.

It belongs to the acetyl-CoA hydrolase/transferase family.

The chain is 4-hydroxybutyrate coenzyme A transferase (cat2) from Clostridium kluyveri (strain ATCC 8527 / DSM 555 / NBRC 12016 / NCIMB 10680 / K1).